The primary structure comprises 294 residues: Chelated iron transport system membrane protein YfeC (294 aa).

The next 8 helical transmembrane spans lie at A17–L37, V51–F71, A93–N113, I140–F160, I169–V189, T194–L214, L221–F241, and A246–A266.

Belongs to the ABC-3 integral membrane protein family.

It localises to the cell inner membrane. Functionally, part of an ATP-driven transport system YfeABC for chelated iron. The protein is Chelated iron transport system membrane protein YfeC (yfeC) of Yersinia pestis.